Consider the following 429-residue polypeptide: C4-dicarboxylate transport protein (429 aa).

The next 8 membrane-spanning stretches (helical) occupy residues 3–23, 44–64, 76–96, 144–164, 184–204, 222–242, 331–351, and 352–372; these read VSIFKTLYFQVLTAITIGVLL, LIKMIIAPVIFCTVVTGIAGM, IALLYFEIVSTLALLIGLVVV, AFASGNILQVLLFAVLFGFAL, VIFGVINMIMRLAPLGAFGAM, LILCFYLTCILFVVLVLGTIA, TLLVVLLLSSKGAAGVTGSGF, and IVLAATISAVGHLPLAGLALI.

This sequence belongs to the dicarboxylate/amino acid:cation symporter (DAACS) (TC 2.A.23) family.

It is found in the cell inner membrane. Responsible for the transport of dicarboxylates such as succinate, fumarate, and malate from the periplasm across the membrane. The polypeptide is C4-dicarboxylate transport protein (Yersinia pestis bv. Antiqua (strain Antiqua)).